The chain runs to 261 residues: Insulin-like growth factor-binding protein-related protein 1 (261 aa).

An N-terminal signal peptide occupies residues 1 to 17; sequence MWIPLLLVALVVPAIRC. One can recognise an IGFBP N-terminal domain in the interval 18–101; that stretch reads ERKCGECNPE…DPPEAMCVCL (84 aa). Cystine bridges form between Cys-21–Cys-45, Cys-24–Cys-47, Cys-29–Cys-48, Cys-36–Cys-51, Cys-59–Cys-82, Cys-76–Cys-98, Cys-100–Cys-118, and Cys-107–Cys-139. The Kazal-like domain maps to 70 to 141; it reads NRGHGPCGEY…RAMHRGPCKS (72 aa). Positions 143–243 constitute an Ig-like C2-type domain; it reads PKITSPPEEA…GESSAAARVV (101 aa). Asn-154 carries N-linked (GlcNAc...) asparagine glycosylation. Cysteines 164 and 227 form a disulfide.

As to expression, expressed by the venom gland.

Its subcellular location is the secreted. This chain is Insulin-like growth factor-binding protein-related protein 1, found in Cupiennius salei (American wandering spider).